The following is a 510-amino-acid chain: MIWHVQNENFILDSTRIFMKAFHLLLFHGSFIFPECILIFGLILLLMIDSTSDQKDRPWFYFISSTSLVMSITALLFRWKEEPIISFSGNFQTNNFNEIFQFLILLCSTLCIPLSVEYIECTEMAITEFLLFVLTATLGGMFLCGANDLITIFVAPECFSLCSYLLSGYTKRDVRSNEATTKYLLMGGASSSILVHGFSWLYGSSGGEIELQEIVNGLINTQMYNSPGISIALISITVGIGFKLSPAPFHQWTPDVYEGSPTPVVAFLSVTSKVAASASATRIFDIPFYFSSNEWHLLLEILAILSMILGNLIAITQTSMKRMLAYSSIGQIGYVIIGIIVGDSNDGYASMITYMLFYISMNLGTFARIVSFGLRTGTDNIRDYAGLYTKDPFLALSSALCLLSLGGLPPLAGFFGKLHLFWCGWQAGLYFLVSIGLLTSVVSIYYYLKIIKLLMTGRNQEITPHVRNYRRSPLRSNNSIEWSMTVCVIASTIPGISMNPILAIAQDTLF.

12 helical membrane passes run 24–44, 59–79, 99–119, 124–144, 149–169, 183–203, 229–249, 295–315, 323–343, 347–367, 395–415, and 418–438; these read LLLF…GLIL, WFYF…LFRW, IFQF…VEYI, MAIT…MFLC, LITI…LSGY, YLLM…WLYG, ISIA…PAPF, WHLL…LIAI, MLAY…IVGD, GYAS…GTFA, ALSS…AGFF, and LHLF…IGLL.

It belongs to the complex I subunit 2 family. NDH is composed of at least 16 different subunits, 5 of which are encoded in the nucleus.

The protein resides in the plastid. It is found in the chloroplast thylakoid membrane. It catalyses the reaction a plastoquinone + NADH + (n+1) H(+)(in) = a plastoquinol + NAD(+) + n H(+)(out). The enzyme catalyses a plastoquinone + NADPH + (n+1) H(+)(in) = a plastoquinol + NADP(+) + n H(+)(out). Its function is as follows. NDH shuttles electrons from NAD(P)H:plastoquinone, via FMN and iron-sulfur (Fe-S) centers, to quinones in the photosynthetic chain and possibly in a chloroplast respiratory chain. The immediate electron acceptor for the enzyme in this species is believed to be plastoquinone. Couples the redox reaction to proton translocation, and thus conserves the redox energy in a proton gradient. This chain is NAD(P)H-quinone oxidoreductase subunit 2, chloroplastic, found in Yucca glauca (Soapweed yucca).